The primary structure comprises 949 residues: MSELDHIKNESVDLVRIPMEEVFEELKCTKQGLTANEASHRLDVFGPNKLEEKKESKLLKFLGFMWNPLSWVMEVAALMAIALANGGGRPPDWQDFVGIVCLLLINSTISFIEENNAGNAAAALMAGLAPKTKVLRDNQWSEQEASILVPGDVISIKLGDIIPADARLLDGDPLKIDQSSLTGESIPVTKNPSDEVFSGSICKQGEIEAIVIATGVHTFFGKAAHLVDNTNQIGHFQKVLTSIGNFCICSIALGIIVELLVMYPIQRRRYRDGIDNLLVLLIGGIPIAMPSVLSVTMATGSHRLFQQGAITKRMTAIEEMAGMDVLCCDKTGTLTLNKLTVDKNLVEVFAKGVGKEHVFLLAARASRIENQDAIDAAIVGMLADPKEARAGVREVHFFPFNPVDKRTALTYVDSDGNWHRASKGAPEQILNLCNCKEDVRRKVHGVIDKFAERGLRSLAVARQEVLEKKKDAPGGPWQLVGLLPLFDPPRHDSAETIRRALNLGVNVKMITGDQLAIGKETGRRLGMGTNMYPSSALLGQVKDSSLGALPVDELIEKADGFAGVFPEHKYEIVHRLQQRNHICGMTGDGVNDAPALKKADIGIAVVDATDAARGASDIVLTEPGLSVIISAVLTSRAIFQRMKNYTIYAVSITIRIVFGFMFIALIWQFDFSPFMVLIIAILNDGTIMTISKDRMKPSPQPDSWKLRDIFSTGVVLGGYQALMTVVFFWVMKDSDFFSNYFGVRPLSQRPEQMMAALYLQVSIISQALIFVTRSRSWSYAECPGLLLLGAFVIAQLVATFIAVYANWSFARIEGAGWGWAGVIWLYSFLTYIPLDLLKFGIRYVLSGKAWLNLLENKTAFTTKKDYGKEEREAQWAAAQRTLHGLQPAEKNNIFNEKNSYSELSQIAEQAKRRAEVVRLREINTLKGHVESVVKLKGLDIDTIQQHYTV.

Ser2 is subject to N-acetylserine. Residues 2 to 61 (SELDHIKNESVDLVRIPMEEVFEELKCTKQGLTANEASHRLDVFGPNKLEEKKESKLLKF) are Cytoplasmic-facing. A helical membrane pass occupies residues 62–81 (LGFMWNPLSWVMEVAALMAI). Over 82–93 (ALANGGGRPPDW) the chain is Extracellular. A helical membrane pass occupies residues 94–114 (QDFVGIVCLLLINSTISFIEE). At 115–243 (NNAGNAAAAL…GHFQKVLTSI (129 aa)) the chain is on the cytoplasmic side. The chain crosses the membrane as a helical span at residues 244–264 (GNFCICSIALGIIVELLVMYP). Over 265 to 273 (IQRRRYRDG) the chain is Extracellular. Residues 274–291 (IDNLLVLLIGGIPIAMPS) traverse the membrane as a helical segment. The Cytoplasmic portion of the chain corresponds to 292-643 (VLSVTMATGS…TSRAIFQRMK (352 aa)). Asp329 acts as the 4-aspartylphosphate intermediate in catalysis. Mg(2+) contacts are provided by Asp588 and Asp592. Residues 644-665 (NYTIYAVSITIRIVFGFMFIAL) form a helical membrane-spanning segment. The Extracellular portion of the chain corresponds to 666-670 (IWQFD). A helical membrane pass occupies residues 671 to 693 (FSPFMVLIIAILNDGTIMTISKD). Topologically, residues 694–709 (RMKPSPQPDSWKLRDI) are cytoplasmic. The chain crosses the membrane as a helical span at residues 710–730 (FSTGVVLGGYQALMTVVFFWV). Residues 731–751 (MKDSDFFSNYFGVRPLSQRPE) lie on the Extracellular side of the membrane. Residues 752 to 772 (QMMAALYLQVSIISQALIFVT) traverse the membrane as a helical segment. Residues 773-784 (RSRSWSYAECPG) lie on the Cytoplasmic side of the membrane. Residues 785–805 (LLLLGAFVIAQLVATFIAVYA) traverse the membrane as a helical segment. Over 806-813 (NWSFARIE) the chain is Extracellular. Residues 814–834 (GAGWGWAGVIWLYSFLTYIPL) traverse the membrane as a helical segment. Over 835–949 (DLLKFGIRYV…IDTIQQHYTV (115 aa)) the chain is Cytoplasmic. At Thr881 the chain carries Phosphothreonine. Phosphoserine is present on residues Ser899 and Ser931. An interaction with 14-3-3 proteins region spans residues 947-949 (YTV). Thr948 bears the Phosphothreonine mark.

The protein belongs to the cation transport ATPase (P-type) (TC 3.A.3) family. Type IIIA subfamily. As to quaternary structure, binds to 14-3-3 proteins. The binding is induced by phosphorylation of Thr-948. Binding to 14-3-3 proteins activates the H(+)-ATPase. In terms of tissue distribution, expressed in guard cells and leaves.

The protein localises to the membrane. It carries out the reaction ATP + H2O + H(+)(in) = ADP + phosphate + 2 H(+)(out). Functionally, the plasma membrane H(+) ATPase of plants and fungi generates a proton gradient that drives the active transport of nutrients by H(+)-symport. The resulting external acidification and/or internal alkinization may mediate growth responses. This is ATPase 5, plasma membrane-type (AHA5) from Arabidopsis thaliana (Mouse-ear cress).